We begin with the raw amino-acid sequence, 417 residues long: Serine hydroxymethyltransferase (417 aa).

(6S)-5,6,7,8-tetrahydrofolate-binding positions include L120 and 124 to 126 (GHL). At K229 the chain carries N6-(pyridoxal phosphate)lysine. Position 354-356 (354-356 (SPF)) interacts with (6S)-5,6,7,8-tetrahydrofolate.

The protein belongs to the SHMT family. Homodimer. The cofactor is pyridoxal 5'-phosphate.

It is found in the cytoplasm. The enzyme catalyses (6R)-5,10-methylene-5,6,7,8-tetrahydrofolate + glycine + H2O = (6S)-5,6,7,8-tetrahydrofolate + L-serine. Its pathway is one-carbon metabolism; tetrahydrofolate interconversion. It functions in the pathway amino-acid biosynthesis; glycine biosynthesis; glycine from L-serine: step 1/1. Catalyzes the reversible interconversion of serine and glycine with tetrahydrofolate (THF) serving as the one-carbon carrier. This reaction serves as the major source of one-carbon groups required for the biosynthesis of purines, thymidylate, methionine, and other important biomolecules. Also exhibits THF-independent aldolase activity toward beta-hydroxyamino acids, producing glycine and aldehydes, via a retro-aldol mechanism. The chain is Serine hydroxymethyltransferase from Acinetobacter baumannii (strain AB307-0294).